The sequence spans 228 residues: Cytochrome c oxidase subunit 2 (228 aa).

Residues 1-26 (MSQWFQLGLQNGNSPLMEQLIFFHDH) lie on the Mitochondrial intermembrane side of the membrane. A helical transmembrane segment spans residues 27 to 48 (ALLVVILITSLVGFFLAALFSN). Over 49 to 62 (KFLHRYLLDGQAIE) the chain is Mitochondrial matrix. Residues 63-82 (TVWTVIPAIILVAIALPSIR) traverse the membrane as a helical segment. Residues 83 to 228 (LLYLIDEIHN…FLKWLELQIS (146 aa)) lie on the Mitochondrial intermembrane side of the membrane. The Cu cation site is built by H161, C196, E198, C200, H204, and M207. E198 contributes to the Mg(2+) binding site.

The protein belongs to the cytochrome c oxidase subunit 2 family. As to quaternary structure, component of the cytochrome c oxidase (complex IV, CIV), a multisubunit enzyme composed of a catalytic core of 3 subunits and several supernumerary subunits. The complex exists as a monomer or a dimer and forms supercomplexes (SCs) in the inner mitochondrial membrane with ubiquinol-cytochrome c oxidoreductase (cytochrome b-c1 complex, complex III, CIII). It depends on Cu cation as a cofactor.

The protein localises to the mitochondrion inner membrane. The enzyme catalyses 4 Fe(II)-[cytochrome c] + O2 + 8 H(+)(in) = 4 Fe(III)-[cytochrome c] + 2 H2O + 4 H(+)(out). Component of the cytochrome c oxidase, the last enzyme in the mitochondrial electron transport chain which drives oxidative phosphorylation. The respiratory chain contains 3 multisubunit complexes succinate dehydrogenase (complex II, CII), ubiquinol-cytochrome c oxidoreductase (cytochrome b-c1 complex, complex III, CIII) and cytochrome c oxidase (complex IV, CIV), that cooperate to transfer electrons derived from NADH and succinate to molecular oxygen, creating an electrochemical gradient over the inner membrane that drives transmembrane transport and the ATP synthase. Cytochrome c oxidase is the component of the respiratory chain that catalyzes the reduction of oxygen to water. Electrons originating from reduced cytochrome c in the intermembrane space (IMS) are transferred via the dinuclear copper A center (CU(A)) of subunit 2 and heme A of subunit 1 to the active site in subunit 1, a binuclear center (BNC) formed by heme A3 and copper B (CU(B)). The BNC reduces molecular oxygen to 2 water molecules using 4 electrons from cytochrome c in the IMS and 4 protons from the mitochondrial matrix. This is Cytochrome c oxidase subunit 2 (COII) from Artemia franciscana (Brine shrimp).